The sequence spans 258 residues: Acidic leucine-rich nuclear phosphoprotein 32 family member E (258 aa).

An N-acetylmethionine modification is found at Met-1. 4 LRR repeats span residues 18 to 38 (EVTELVLDNCLCVNGEIEGLN), 43 to 64 (ELEFLSMANVELSSLARLPSLN), 65 to 87 (KLRKLELSDNIISGGLEVLAEKC), and 89 to 110 (NLTYLNLSGNKIKDLSTVEALQ). Lys-68 is covalently cross-linked (Glycyl lysine isopeptide (Lys-Gly) (interchain with G-Cter in SUMO2)). The LRRCT domain maps to 123 to 161 (CEITNLEDYRESIFELLQQITYLDGFDQEDNEAPDSEEE). Composition is skewed to acidic residues over residues 149–206 (DQED…EEEV) and 216–238 (IQDEEDDDDYVDEGEEEEEEEEE). Residues 149 to 258 (DQEDNEAPDS…AEDDGEEDDD (110 aa)) form a disordered region. The ZID domain stretch occupies residues 205-258 (EVGLSYLMKEEIQDEEDDDDYVDEGEEEEEEEEEGPRGEKRKRDAEDDGEEDDD). A compositionally biased stretch (basic and acidic residues) spans 239-249 (GPRGEKRKRDA).

It belongs to the ANP32 family. In terms of assembly, component of a SWR1-like complex, composed of EP400, KAT5/TIP60, TRRAP, BRD8, RUVBL1, RUVBL2, ING3 and ANP32E; the complex does not contain SRCAP. Interacts with H2A.Z/H2AZ1. Interacts with the importin alpha KPNA1 and KPNA2. In terms of processing, phosphorylated. The phosphorylation is nuclear localization signal (NLS)-dependent.

The protein localises to the cytoplasm. Its subcellular location is the nucleus. In terms of biological role, histone chaperone that specifically mediates the genome-wide removal of histone H2A.Z/H2AZ1 from the nucleosome: removes H2A.Z/H2AZ1 from its normal sites of deposition, especially from enhancer and insulator regions. Not involved in deposition of H2A.Z/H2AZ1 in the nucleosome. May stabilize the evicted H2A.Z/H2AZ1-H2B dimer, thus shifting the equilibrium towards dissociation and the off-chromatin state. Inhibits activity of protein phosphatase 2A (PP2A). Does not inhibit protein phosphatase 1. May play a role in cerebellar development and synaptogenesis. The polypeptide is Acidic leucine-rich nuclear phosphoprotein 32 family member E (Anp32e) (Rattus norvegicus (Rat)).